A 236-amino-acid polypeptide reads, in one-letter code: 2,3,4,5-tetrahydropyridine-2,6-dicarboxylate N-acetyltransferase (236 aa).

Belongs to the transferase hexapeptide repeat family. DapH subfamily.

The catalysed reaction is (S)-2,3,4,5-tetrahydrodipicolinate + acetyl-CoA + H2O = L-2-acetamido-6-oxoheptanedioate + CoA. Its pathway is amino-acid biosynthesis; L-lysine biosynthesis via DAP pathway; LL-2,6-diaminopimelate from (S)-tetrahydrodipicolinate (acetylase route): step 1/3. In terms of biological role, catalyzes the transfer of an acetyl group from acetyl-CoA to tetrahydrodipicolinate. The protein is 2,3,4,5-tetrahydropyridine-2,6-dicarboxylate N-acetyltransferase of Clostridium botulinum (strain 657 / Type Ba4).